Here is a 688-residue protein sequence, read N- to C-terminus: MAKKKGDQYDSDGAEDQDYDEEPVFEDPAGFVDDVGDDELLGDFLKQKPCESDGVENVIVVDNIPVVGPARFPKLQGVLEKIFKNAGTIVNIHYPKDDEENTKGFAFIEFKNPEMAEEAVKAFNNYRLDKSHTLLVNLFSDFQKYSDIPKDWSPPESQPYKVQNDLYTFLSEPDAQDQFCVVAESTPGAVQVQFWHNTQPEPVELLTRERFTETYVKWSPLGTYIVTFHKQGVVIWGGSSFTKINKFAHSNTQYVDFSPCEQYLVTYGPNGQKIIIWDIRTGTEKRSFVSDGSSNMSMFRWSHDDKYVARMGDNAIHVYETNTFYLLDKKSIKVQGIRNFSWSPTDNIIAYWMSEDIDAPARVTLLEIPKKIEVRNKNLFNVADCKIHWQKSGDYLCVKVDRYSKSKKDKKDADVKFLGMFYNFEIFHMREKDIPVDSVEVKETILAFAWEPVGSKFSIIHGEPSNANVSFYEAKKGQEPTMLRKMEKKVCSHLFWSPRGQFIVLANLQMGSFEFVDTNDFTIMKSGDHYRASEVEWDPTGRYVVTGTSGKVKEDHGYHLWSFQGRILKRVNLKNFMLFLWRPRPPTLLPDERQKEIRKNLKKYYAQFESKDRVRMTRASKELLEKRAKLREQFVEYRAKRVNDWEEQKYRRMQLRNNMDTDTLEADPDNVEEEIVEILVREDTTLLE.

Residues M1 to P28 form a disordered region. Over residues Y9 to F25 the composition is skewed to acidic residues. An RRM domain is found at N57 to D141. WD repeat units lie at residues R208–K246, F247–S287, D291–K329, I332–E367, E440–M482, and G527–N572. Residues D612–N643 adopt a coiled-coil conformation.

Belongs to the eIF-3 subunit B family. In terms of assembly, component of the eukaryotic translation initiation factor 3 (eIF-3) complex.

It localises to the cytoplasm. In terms of biological role, RNA-binding component of the eukaryotic translation initiation factor 3 (eIF-3) complex, which is involved in protein synthesis of a specialized repertoire of mRNAs and, together with other initiation factors, stimulates binding of mRNA and methionyl-tRNAi to the 40S ribosome. The eIF-3 complex specifically targets and initiates translation of a subset of mRNAs involved in cell proliferation. The chain is Eukaryotic translation initiation factor 3 subunit B from Culex quinquefasciatus (Southern house mosquito).